The chain runs to 167 residues: Small ribosomal subunit protein uS5 (167 aa).

Residues 11-74 (LQEKLIAVNR…EKARRAMINV (64 aa)) form the S5 DRBM domain.

Belongs to the universal ribosomal protein uS5 family. Part of the 30S ribosomal subunit. Contacts proteins S4 and S8.

Its function is as follows. With S4 and S12 plays an important role in translational accuracy. Functionally, located at the back of the 30S subunit body where it stabilizes the conformation of the head with respect to the body. This Serratia proteamaculans (strain 568) protein is Small ribosomal subunit protein uS5.